The sequence spans 377 residues: ATP synthase gamma chain, chloroplastic (377 aa).

The transit peptide at 1 to 55 (MSCSNLTMLVSSKPSLSDSSALSFRSSVSPFQLPNHNTSGPSNPSRSSSVTPVHC) directs the protein to the chloroplast. Positions 30 to 52 (PFQLPNHNTSGPSNPSRSSSVTP) are disordered. The segment covering 37-52 (NTSGPSNPSRSSSVTP) has biased composition (low complexity). Cysteine 143 is an active-site residue. An intrachain disulfide couples cysteine 253 to cysteine 259.

It belongs to the ATPase gamma chain family. As to quaternary structure, F-type ATPases have 2 components, CF(1) - the catalytic core - and CF(0) - the membrane proton channel. CF(1) has five subunits: alpha(3), beta(3), gamma(1), delta(1), epsilon(1). CF(0) has four main subunits: a, b, b' and c.

It is found in the plastid. Its subcellular location is the chloroplast thylakoid membrane. In terms of biological role, produces ATP from ADP in the presence of a proton gradient across the membrane. The gamma chain is believed to be important in regulating ATPase activity and the flow of protons through the CF(0) complex. This chain is ATP synthase gamma chain, chloroplastic (ATPC), found in Nicotiana tabacum (Common tobacco).